A 345-amino-acid polypeptide reads, in one-letter code: N-acetyl-gamma-glutamyl-phosphate reductase (345 aa).

Cysteine 142 is an active-site residue.

The protein belongs to the NAGSA dehydrogenase family. Type 1 subfamily.

It is found in the cytoplasm. It catalyses the reaction N-acetyl-L-glutamate 5-semialdehyde + phosphate + NADP(+) = N-acetyl-L-glutamyl 5-phosphate + NADPH + H(+). The protein operates within amino-acid biosynthesis; L-arginine biosynthesis; N(2)-acetyl-L-ornithine from L-glutamate: step 3/4. Catalyzes the NADPH-dependent reduction of N-acetyl-5-glutamyl phosphate to yield N-acetyl-L-glutamate 5-semialdehyde. The polypeptide is N-acetyl-gamma-glutamyl-phosphate reductase (Thermus thermophilus (strain ATCC BAA-163 / DSM 7039 / HB27)).